A 531-amino-acid chain; its full sequence is Serine protease gd (531 aa).

An N-terminal signal peptide occupies residues M1–A19. Residues P155–Q174 form a disordered region. Residues I246 to I531 enclose the Peptidase S1 domain. N-linked (GlcNAc...) asparagine glycosylation is present at N272. Cysteines 280 and 296 form a disulfide. Catalysis depends on charge relay system residues H295 and D350. N397 and N445 each carry an N-linked (GlcNAc...) asparagine glycan. C432 and C449 are disulfide-bonded. Catalysis depends on S471, which acts as the Charge relay system.

The protein belongs to the peptidase S1 family. In terms of processing, proteolytically activated by the protease ndl. In terms of tissue distribution, expression begins in previtellogenic stages and is seen in germline-derived nurse cells of the germarium. Expression continues throughout oogenesis with transcripts from the nurse cells accumulating in the oocytes. Most abundant in the ovaries, the level of protein decreases from the moment of egg laying and is essentially gone by 4 hours.

The protein resides in the secreted. In terms of biological role, component of the extracellular signaling pathway that establishes the dorsal-ventral pathway of the embryo. A protease cascade involving ndl, gd, snk and ea results in activation of the spz Toll receptor ligand; acts downstream of ndl but upstream of snk and ea. Activation of ea requires activation of the ndl-gd-snk protease cascade and sulfation of a vitelline membrane component by pip. Localized activation of the Toll receptor in the ventral region of the embryo defines cell identities along the dorsal-ventral continuum. The polypeptide is Serine protease gd (Drosophila melanogaster (Fruit fly)).